The following is a 564-amino-acid chain: Threonine--tRNA ligase (564 aa).

The catalytic stretch occupies residues 167–464 (DHRAIGKRLE…LLEKTHGNLP (298 aa)). Positions 260, 311, and 441 each coordinate Zn(2+).

Belongs to the class-II aminoacyl-tRNA synthetase family. In terms of assembly, homodimer. It depends on Zn(2+) as a cofactor.

It localises to the cytoplasm. The catalysed reaction is tRNA(Thr) + L-threonine + ATP = L-threonyl-tRNA(Thr) + AMP + diphosphate + H(+). Functionally, catalyzes the attachment of threonine to tRNA(Thr) in a two-step reaction: L-threonine is first activated by ATP to form Thr-AMP and then transferred to the acceptor end of tRNA(Thr). Also edits incorrectly charged L-seryl-tRNA(Thr). The polypeptide is Threonine--tRNA ligase (Mycoplasma pneumoniae (strain ATCC 29342 / M129 / Subtype 1) (Mycoplasmoides pneumoniae)).